The following is an 895-amino-acid chain: Receptor-like protein kinase FERONIA (895 aa).

The first 27 residues, 1 to 27 (MKITEGRFRLSLLLLLLLISAATLISA), serve as a signal peptide directing secretion. At 28–447 (ADYSPTEKIL…TTRKSKSNTA (420 aa)) the chain is on the extracellular side. 10 N-linked (GlcNAc...) asparagine glycosylation sites follow: Asn-46, Asn-124, Asn-142, Asn-171, Asn-219, Asn-269, Asn-305, Asn-330, Asn-345, and Asn-410. Residues 448–468 (IIAGAASGAVVLALIIGFCVF) traverse the membrane as a helical segment. At 469-895 (GAYRRRKRGD…FSQIMNPKGR (427 aa)) the chain is on the cytoplasmic side. The Protein kinase domain occupies 536 to 810 (FDESRVLGVG…GDVLWNLEFA (275 aa)). Residues 542 to 550 (LGVGGFGKV) and Lys-565 contribute to the ATP site. The active-site Proton acceptor is Asp-661. The segment at 844–895 (NDKSSDVYEGNVTDSRSSGIDMSIGGRSLASEDSDGLTPSAVFSQIMNPKGR) is disordered. A phosphoserine mark is found at Ser-858, Ser-866, Ser-871, and Ser-874. Positions 884 to 895 (AVFSQIMNPKGR) are enriched in polar residues.

It belongs to the protein kinase superfamily. Ser/Thr protein kinase family. Interacts with ROPGEF1. Interacts with RALF1; triggering phosphorylation status and subsequent activation. Interacts with LRE and LLG1. Interacts, via its extracellular domain, with FERONIA at the synergid cell surface. Post-translationally, autophosphorylated. In terms of processing, phosphorylated at Ser-858, Ser-871 and Ser-874 upon activation by RALF1. As to expression, expressed in leaves, buds, flowers, siliques, young ovules primordia, and young anthers with immature pollen, but not detected in mature pollen. Highest expression in the synergid cells of the female gametophyte.

It localises to the cell membrane. The enzyme catalyses L-seryl-[protein] + ATP = O-phospho-L-seryl-[protein] + ADP + H(+). It carries out the reaction L-threonyl-[protein] + ATP = O-phospho-L-threonyl-[protein] + ADP + H(+). Receptor-like protein kinase that mediates the female control of male gamete delivery during fertilization, including growth cessation of compatible pollen tubes ensuring a reproductive isolation barriers, by regulating MLO7 subcellular polarization upon pollen tube perception in the female gametophyte synergids. Required for cell elongation during vegetative growth, mostly in a brassinosteroids- (BR-) independent manner. Acts as an upstream regulator for the Rac/Rop-signaling pathway that controls ROS-mediated root hair development. Seems to regulate a cross-talk between brassinosteroids and ethylene signaling pathways during hypocotyl elongation. Negative regulator of brassinosteroid response in light-grown hypocotyls, but required for brassinosteroid response in etiolated seedlings. Mediates sensitivity to powdery mildew (e.g. Golovinomyces orontii). Positive regulator of auxin-promoted growth that represses the abscisic acid (ABA) signaling via the activation of ABI2 phosphatase. Required for RALF1-mediated extracellular alkalinization in a signaling pathway preventing cell expansion. This is Receptor-like protein kinase FERONIA from Arabidopsis thaliana (Mouse-ear cress).